We begin with the raw amino-acid sequence, 618 residues long: Beta-glucosidase C (618 aa).

The N-terminal stretch at 1–19 (MRVDSTVLALVALATDCLG) is a signal peptide. N-linked (GlcNAc...) asparagine glycosylation is found at N40, N82, N104, N211, and N263. The active site involves D330. N-linked (GlcNAc...) asparagine glycosylation is found at N417, N448, N477, N482, N502, and N517.

It belongs to the glycosyl hydrolase 3 family.

It is found in the secreted. The enzyme catalyses Hydrolysis of terminal, non-reducing beta-D-glucosyl residues with release of beta-D-glucose.. It functions in the pathway glycan metabolism; cellulose degradation. Its function is as follows. Beta-glucosidases are one of a number of cellulolytic enzymes involved in the degradation of cellulosic biomass. Catalyzes the last step releasing glucose from the inhibitory cellobiose. This chain is Beta-glucosidase C (bglC), found in Emericella nidulans (strain FGSC A4 / ATCC 38163 / CBS 112.46 / NRRL 194 / M139) (Aspergillus nidulans).